The following is a 98-amino-acid chain: YcgL domain-containing protein CJA_2437 (98 aa).

Residues 3–87 (IIAEIYRSPK…RDLVDAEAKR (85 aa)) enclose the YcgL domain.

The chain is YcgL domain-containing protein CJA_2437 from Cellvibrio japonicus (strain Ueda107) (Pseudomonas fluorescens subsp. cellulosa).